The chain runs to 186 residues: Elongation factor P (186 aa).

It belongs to the elongation factor P family.

The protein localises to the cytoplasm. It functions in the pathway protein biosynthesis; polypeptide chain elongation. Functionally, involved in peptide bond synthesis. Stimulates efficient translation and peptide-bond synthesis on native or reconstituted 70S ribosomes in vitro. Probably functions indirectly by altering the affinity of the ribosome for aminoacyl-tRNA, thus increasing their reactivity as acceptors for peptidyl transferase. This chain is Elongation factor P, found in Clostridium acetobutylicum (strain ATCC 824 / DSM 792 / JCM 1419 / IAM 19013 / LMG 5710 / NBRC 13948 / NRRL B-527 / VKM B-1787 / 2291 / W).